A 461-amino-acid polypeptide reads, in one-letter code: Bifunctional protein HldE (461 aa).

The segment at 1–312 is ribokinase; that stretch reads MLEFLSQQKP…IKSFNRVDFE (312 aa). Residue 191-194 coordinates ATP; that stretch reads NKKE. D259 is a catalytic residue. The interval 334–461 is cytidylyltransferase; it reads FTNGCFDIVH…KIIEKIKDKK (128 aa).

In the N-terminal section; belongs to the carbohydrate kinase PfkB family. It in the C-terminal section; belongs to the cytidylyltransferase family. Homodimer.

The enzyme catalyses D-glycero-beta-D-manno-heptose 7-phosphate + ATP = D-glycero-beta-D-manno-heptose 1,7-bisphosphate + ADP + H(+). It catalyses the reaction D-glycero-beta-D-manno-heptose 1-phosphate + ATP + H(+) = ADP-D-glycero-beta-D-manno-heptose + diphosphate. It functions in the pathway nucleotide-sugar biosynthesis; ADP-L-glycero-beta-D-manno-heptose biosynthesis; ADP-L-glycero-beta-D-manno-heptose from D-glycero-beta-D-manno-heptose 7-phosphate: step 1/4. The protein operates within nucleotide-sugar biosynthesis; ADP-L-glycero-beta-D-manno-heptose biosynthesis; ADP-L-glycero-beta-D-manno-heptose from D-glycero-beta-D-manno-heptose 7-phosphate: step 3/4. Functionally, catalyzes the phosphorylation of D-glycero-D-manno-heptose 7-phosphate at the C-1 position to selectively form D-glycero-beta-D-manno-heptose-1,7-bisphosphate. In terms of biological role, catalyzes the ADP transfer from ATP to D-glycero-beta-D-manno-heptose 1-phosphate, yielding ADP-D-glycero-beta-D-manno-heptose. The chain is Bifunctional protein HldE from Campylobacter jejuni subsp. jejuni serotype O:6 (strain 81116 / NCTC 11828).